The primary structure comprises 95 residues: Small ubiquitin-related modifier 2-A (95 aa).

Lysine 11 participates in a covalent cross-link: Glycyl lysine isopeptide (Lys-Gly) (interchain with G-Cter in SUMO). One can recognise a Ubiquitin-like domain in the interval aspartate 16 to phenylalanine 95. Glycine 93 participates in a covalent cross-link: Glycyl lysine isopeptide (Gly-Lys) (interchain with K-? in acceptor proteins). The propeptide occupies serine 94–phenylalanine 95.

This sequence belongs to the ubiquitin family. SUMO subfamily. Interacts with sae2 and ube2i. Covalently attached to a number of proteins, including top2. Post-translationally, polymeric chains can be formed through Lys-11 cross-linking. In terms of processing, cleavage of precursor form by a sentrin-specific protease is necessary for function.

It localises to the nucleus. Its function is as follows. Ubiquitin-like protein that can be covalently attached to proteins as a monomer or as a lysine-linked polymer. Covalent attachment via an isopeptide bond to its substrates requires prior activation by the E1 complex sae1-sae2 and linkage to the E2 enzyme ube2i, and can be promoted by an E3 ligase such as pias1-4. This post-translational modification on lysine residues of proteins plays a crucial role in a number of cellular processes such as nuclear transport, DNA replication and repair, mitosis and signal transduction. Polymeric sumo2 chains are also susceptible to polyubiquitination which functions as a signal for proteasomal degradation of modified proteins. This is Small ubiquitin-related modifier 2-A (sumo2-a) from Xenopus laevis (African clawed frog).